Consider the following 211-residue polypeptide: Large ribosomal subunit protein uL4 (211 aa).

Residues alanine 42–glycine 87 form a disordered region. Over residues glycine 60–glycine 71 the composition is skewed to basic residues.

It belongs to the universal ribosomal protein uL4 family. As to quaternary structure, part of the 50S ribosomal subunit.

Functionally, one of the primary rRNA binding proteins, this protein initially binds near the 5'-end of the 23S rRNA. It is important during the early stages of 50S assembly. It makes multiple contacts with different domains of the 23S rRNA in the assembled 50S subunit and ribosome. Its function is as follows. Forms part of the polypeptide exit tunnel. This chain is Large ribosomal subunit protein uL4, found in Synechococcus sp. (strain CC9902).